Here is a 332-residue protein sequence, read N- to C-terminus: Ketol-acid reductoisomerase (NADP(+)) (332 aa).

One can recognise a KARI N-terminal Rossmann domain in the interval 1–182 (MAVIYYDKDC…GSNRAGVLET (182 aa)). NADP(+) is bound by residues 25 to 28 (YGAQ) and 83 to 86 (DTSQ). His-108 is a catalytic residue. Gly-134 is a binding site for NADP(+). Residues 183–328 (TFAEETETDL…AELRSMMSWL (146 aa)) form the KARI C-terminal knotted domain. Mg(2+)-binding residues include Asp-191, Glu-195, Glu-227, and Glu-231. Ser-252 is a substrate binding site.

Belongs to the ketol-acid reductoisomerase family. Mg(2+) is required as a cofactor.

The catalysed reaction is (2R)-2,3-dihydroxy-3-methylbutanoate + NADP(+) = (2S)-2-acetolactate + NADPH + H(+). It carries out the reaction (2R,3R)-2,3-dihydroxy-3-methylpentanoate + NADP(+) = (S)-2-ethyl-2-hydroxy-3-oxobutanoate + NADPH + H(+). It functions in the pathway amino-acid biosynthesis; L-isoleucine biosynthesis; L-isoleucine from 2-oxobutanoate: step 2/4. It participates in amino-acid biosynthesis; L-valine biosynthesis; L-valine from pyruvate: step 2/4. Its function is as follows. Involved in the biosynthesis of branched-chain amino acids (BCAA). Catalyzes an alkyl-migration followed by a ketol-acid reduction of (S)-2-acetolactate (S2AL) to yield (R)-2,3-dihydroxy-isovalerate. In the isomerase reaction, S2AL is rearranged via a Mg-dependent methyl migration to produce 3-hydroxy-3-methyl-2-ketobutyrate (HMKB). In the reductase reaction, this 2-ketoacid undergoes a metal-dependent reduction by NADPH to yield (R)-2,3-dihydroxy-isovalerate. The polypeptide is Ketol-acid reductoisomerase (NADP(+)) (Dehalococcoides mccartyi (strain ATCC BAA-2266 / KCTC 15142 / 195) (Dehalococcoides ethenogenes (strain 195))).